Here is a 422-residue protein sequence, read N- to C-terminus: Chorismate synthase (422 aa).

NADP(+) contacts are provided by R43 and R49. FMN is bound by residues R143–S145, Q264–A265, G309, K324–T328, and R350.

This sequence belongs to the chorismate synthase family. In terms of assembly, homotetramer. FMNH2 is required as a cofactor.

The enzyme catalyses 5-O-(1-carboxyvinyl)-3-phosphoshikimate = chorismate + phosphate. It participates in metabolic intermediate biosynthesis; chorismate biosynthesis; chorismate from D-erythrose 4-phosphate and phosphoenolpyruvate: step 7/7. Its function is as follows. Catalyzes the anti-1,4-elimination of the C-3 phosphate and the C-6 proR hydrogen from 5-enolpyruvylshikimate-3-phosphate (EPSP) to yield chorismate, which is the branch point compound that serves as the starting substrate for the three terminal pathways of aromatic amino acid biosynthesis. This reaction introduces a second double bond into the aromatic ring system. The sequence is that of Chorismate synthase from Corynebacterium jeikeium (strain K411).